The following is a 428-amino-acid chain: Enolase (428 aa).

Gln-162 provides a ligand contact to (2R)-2-phosphoglycerate. Residue Glu-204 is the Proton donor of the active site. Asp-241, Glu-283, and Asp-310 together coordinate Mg(2+). Positions 335, 364, 365, and 386 each coordinate (2R)-2-phosphoglycerate. The Proton acceptor role is filled by Lys-335.

It belongs to the enolase family. It depends on Mg(2+) as a cofactor.

The protein localises to the cytoplasm. Its subcellular location is the secreted. It localises to the cell surface. The catalysed reaction is (2R)-2-phosphoglycerate = phosphoenolpyruvate + H2O. It functions in the pathway carbohydrate degradation; glycolysis; pyruvate from D-glyceraldehyde 3-phosphate: step 4/5. Functionally, catalyzes the reversible conversion of 2-phosphoglycerate (2-PG) into phosphoenolpyruvate (PEP). It is essential for the degradation of carbohydrates via glycolysis. This chain is Enolase, found in Rhodococcus erythropolis (strain PR4 / NBRC 100887).